The sequence spans 1812 residues: Sperm flagellar protein 2 (1812 aa).

Residues 1 to 105 enclose the Calponin-homology (CH) domain; that stretch reads MSEILCHWLN…LLYQLYIALQ (105 aa). Coiled-coil stretches lie at residues 178 to 260 and 374 to 403; these read LENF…KDLQ and EERRLKDFQDALDREAALAKQAKIDYEEQA. Basic and acidic residues predominate over residues 618–630; sequence EEKASPVRQESGD. The interval 618–658 is disordered; the sequence is EEKASPVRQESGDRSQNLHNVLSAEGTPETEDETRLSTKKT. 3 coiled-coil regions span residues 724-750, 803-827, and 868-897; these read LNQAKLLEEALTGFNRNLIELEGKKSQ, ENINQRVAAENQDMDEDQNLRDQIQ, and KEMFMAEIMKKENKAKKKSEEKEAEKKEEF. Residues 879–897 are compositionally biased toward basic and acidic residues; that stretch reads ENKAKKKSEEKEAEKKEEF. Disordered regions lie at residues 879–1002, 1272–1322, and 1793–1812; these read ENKA…KPGS, EEKE…APVI, and EHIQGSDGESSPSRLTEEKK. Pro residues predominate over residues 902-913; that stretch reads ATPPTPPAPPPS. Composition is skewed to basic and acidic residues over residues 914 to 929, 943 to 961, and 1272 to 1285; these read EPEKEKEAHPPHERSK, HGNRESPQEGKGKKSETSP, and EEKENQPADTKEKP. The segment covering 1292–1310 has biased composition (basic residues); it reads KKVKKEPPKKKREDKKGKG. Positions 1317–1669 are interaction with IFT20; sequence ESAPVITVEE…AEKTSSFIDM (353 aa).

As to quaternary structure, interacts (via C-terminus) with IFT20. Interacts with DYNC1I2. Predominantly expressed in ciliated tissues. Mainly expressed in testis, followed by trachea. Also expressed at lower level in lung, kidney and liver.

Its subcellular location is the cell projection. The protein localises to the cilium. It localises to the flagellum. It is found in the cytoplasm. The protein resides in the golgi apparatus. Functionally, required for correct axoneme development in spermatozoa. Important for normal development of the manchette and sperm head morphology. Essential for male fertility. Plays a role in localization of the intraflagellar transport protein IFT20 to the manchette, suggesting function as an adapter for dynein-mediated protein transport during spermatogenesis. Also plays a role in bone growth where it seems to be required for normal osteoblast differentiation. In Sus scrofa (Pig), this protein is Sperm flagellar protein 2 (SPEF2).